A 789-amino-acid chain; its full sequence is Homocitrate dehydratase, mitochondrial (789 aa).

The N-terminal 14 residues, 1-14 (MLSSANRFYIKRHL), are a transit peptide targeting the mitochondrion. Substrate-binding positions include Gln-96 and 189 to 191 (DSH). Residues Cys-385, Cys-448, and Cys-451 each contribute to the [4Fe-4S] cluster site. Substrate is bound by residues Arg-476, Arg-481, Lys-610, and 672-673 (AR).

Belongs to the aconitase/IPM isomerase family. It depends on [4Fe-4S] cluster as a cofactor.

The protein resides in the mitochondrion. The enzyme catalyses (2R)-homocitrate = cis-homoaconitate + H2O. Its pathway is amino-acid biosynthesis; L-lysine biosynthesis via AAA pathway; L-alpha-aminoadipate from 2-oxoglutarate: step 2/5. Its function is as follows. Catalyzes the reversible dehydration of (R)-homocitrate to cis-homoaconitate, a step in the alpha-aminoadipate pathway for lysine biosynthesis. The sequence is that of Homocitrate dehydratase, mitochondrial (ACO2) from Saccharomyces cerevisiae (strain ATCC 204508 / S288c) (Baker's yeast).